Reading from the N-terminus, the 314-residue chain is Cytochrome c biogenesis protein CcsA (314 aa).

A run of 8 helical transmembrane segments spans residues 15–35 (VSFIGILIFYFLLINLPISLI), 48–68 (LITILINLFIALQLISRWIIS), 73–93 (ISNLYESLYFLVWGITLGQLL), 102–122 (IIPAIAIPIELLTIAFACFVL), 148–168 (VMLSYAALIMGSLLSASVLFI), 216–236 (SILVGFVLLTLGLITGAIWAN), 250–267 (TWAFISWLFYAAYLHMRI), and 277–297 (ALLATSGFFVVLICYIGVNFL).

It belongs to the CcmF/CycK/Ccl1/NrfE/CcsA family. As to quaternary structure, may interact with ccs1.

It is found in the cellular thylakoid membrane. Functionally, required during biogenesis of c-type cytochromes (cytochrome c6 and cytochrome f) at the step of heme attachment. The chain is Cytochrome c biogenesis protein CcsA from Prochlorococcus marinus subsp. pastoris (strain CCMP1986 / NIES-2087 / MED4).